A 245-amino-acid polypeptide reads, in one-letter code: Chymotrypsin B (245 aa).

5 disulfide bridges follow: C1–C121, C42–C58, C135–C201, C167–C182, and C191–C220. A propeptide spanning residues 14–15 (AR) is cleaved from the precursor. Residues 16–243 (IVNGEEAVPH…LRGWVDQILA (228 aa)) form the Peptidase S1 domain. Residues H57 and D101 each act as charge relay system in the active site. Residue S195 is the Charge relay system of the active site.

This sequence belongs to the peptidase S1 family.

It is found in the secreted. The protein localises to the extracellular space. The catalysed reaction is Preferential cleavage: Tyr-|-Xaa, Trp-|-Xaa, Phe-|-Xaa, Leu-|-Xaa.. This is Chymotrypsin B from Gadus morhua (Atlantic cod).